The sequence spans 271 residues: 4-hydroxy-tetrahydrodipicolinate reductase (271 aa).

NAD(+) contacts are provided by residues 10–15 (GAGGRM), Glu-36, 100–102 (GTT), and 124–127 (SGNM). His-157 acts as the Proton donor/acceptor in catalysis. Position 158 (His-158) interacts with (S)-2,3,4,5-tetrahydrodipicolinate. Residue Lys-161 is the Proton donor of the active site. A (S)-2,3,4,5-tetrahydrodipicolinate-binding site is contributed by 167–168 (GT).

Belongs to the DapB family.

The protein resides in the cytoplasm. It carries out the reaction (S)-2,3,4,5-tetrahydrodipicolinate + NAD(+) + H2O = (2S,4S)-4-hydroxy-2,3,4,5-tetrahydrodipicolinate + NADH + H(+). It catalyses the reaction (S)-2,3,4,5-tetrahydrodipicolinate + NADP(+) + H2O = (2S,4S)-4-hydroxy-2,3,4,5-tetrahydrodipicolinate + NADPH + H(+). It functions in the pathway amino-acid biosynthesis; L-lysine biosynthesis via DAP pathway; (S)-tetrahydrodipicolinate from L-aspartate: step 4/4. Its function is as follows. Catalyzes the conversion of 4-hydroxy-tetrahydrodipicolinate (HTPA) to tetrahydrodipicolinate. This Rhodopseudomonas palustris (strain ATCC BAA-98 / CGA009) protein is 4-hydroxy-tetrahydrodipicolinate reductase.